The primary structure comprises 115 residues: Pro-neuregulin-4, membrane-bound isoform (115 aa).

Residues 1-62 (MPTDHEQPCG…SSIPSESNLS (62 aa)) lie on the Extracellular side of the membrane. The 42-residue stretch at 5–46 (HEQPCGPRHRSFCLNGGICYVIPTIPSPFCRCIENYTGARCE) folds into the EGF-like domain. 3 disulfides stabilise this stretch: Cys-9/Cys-23, Cys-17/Cys-34, and Cys-36/Cys-45. Residues Asn-39 and Asn-60 are each glycosylated (N-linked (GlcNAc...) asparagine). Residues 63-83 (AAFVVLAVLLTLTIAALCFLC) form a helical membrane-spanning segment. Topologically, residues 84–115 (RKGHLQRASSVQCEISLVETNNTRTRHSHREH) are cytoplasmic.

It belongs to the neuregulin family. Interacts with ERBB4. Proteolytic cleavage close to the plasma membrane on the external face leads to the release of the soluble growth factor form. Post-translationally, extensive glycosylation precedes the proteolytic cleavage. In terms of tissue distribution, highly expressed in pancreas; weakly expressed in muscle.

It is found in the cell membrane. The protein localises to the secreted. Functionally, low affinity ligand for the ERBB4 tyrosine kinase receptor. Concomitantly recruits ERBB1 and ERBB2 coreceptors, resulting in ligand-stimulated tyrosine phosphorylation and activation of the ERBB receptors. Does not bind to the ERBB1, ERBB2 and ERBB3 receptors. The sequence is that of Pro-neuregulin-4, membrane-bound isoform (Nrg4) from Mus musculus (Mouse).